The following is a 261-amino-acid chain: Cytochrome c oxidase subunit 3 (261 aa).

Over Met-1–Pro-15 the chain is Mitochondrial matrix. The helical transmembrane segment at Trp-16–Trp-34 threads the bilayer. Residues Phe-35–Val-40 lie on the Mitochondrial intermembrane side of the membrane. The helical transmembrane segment at Ala-41 to Thr-66 threads the bilayer. The Mitochondrial matrix portion of the chain corresponds to Phe-67 to Thr-72. A helical transmembrane segment spans residues Pro-73 to Ser-105. The Mitochondrial intermembrane portion of the chain corresponds to Leu-106 to Glu-128. The chain crosses the membrane as a helical span at residues Val-129 to Met-152. Residues Glu-153–Asn-155 lie on the Mitochondrial matrix side of the membrane. The chain crosses the membrane as a helical span at residues Arg-156–Glu-183. Residues Ala-184–Asp-190 lie on the Mitochondrial intermembrane side of the membrane. A helical transmembrane segment spans residues Gly-191–Leu-223. Over Lys-224 to His-232 the chain is Mitochondrial matrix. A helical transmembrane segment spans residues Phe-233–Ile-256. Topologically, residues Tyr-257–Ser-261 are mitochondrial intermembrane.

Belongs to the cytochrome c oxidase subunit 3 family. As to quaternary structure, component of the cytochrome c oxidase (complex IV, CIV), a multisubunit enzyme composed of 14 subunits. The complex is composed of a catalytic core of 3 subunits MT-CO1, MT-CO2 and MT-CO3, encoded in the mitochondrial DNA, and 11 supernumerary subunits COX4I, COX5A, COX5B, COX6A, COX6B, COX6C, COX7A, COX7B, COX7C, COX8 and NDUFA4, which are encoded in the nuclear genome. The complex exists as a monomer or a dimer and forms supercomplexes (SCs) in the inner mitochondrial membrane with NADH-ubiquinone oxidoreductase (complex I, CI) and ubiquinol-cytochrome c oxidoreductase (cytochrome b-c1 complex, complex III, CIII), resulting in different assemblies (supercomplex SCI(1)III(2)IV(1) and megacomplex MCI(2)III(2)IV(2)).

Its subcellular location is the mitochondrion inner membrane. The enzyme catalyses 4 Fe(II)-[cytochrome c] + O2 + 8 H(+)(in) = 4 Fe(III)-[cytochrome c] + 2 H2O + 4 H(+)(out). Functionally, component of the cytochrome c oxidase, the last enzyme in the mitochondrial electron transport chain which drives oxidative phosphorylation. The respiratory chain contains 3 multisubunit complexes succinate dehydrogenase (complex II, CII), ubiquinol-cytochrome c oxidoreductase (cytochrome b-c1 complex, complex III, CIII) and cytochrome c oxidase (complex IV, CIV), that cooperate to transfer electrons derived from NADH and succinate to molecular oxygen, creating an electrochemical gradient over the inner membrane that drives transmembrane transport and the ATP synthase. Cytochrome c oxidase is the component of the respiratory chain that catalyzes the reduction of oxygen to water. Electrons originating from reduced cytochrome c in the intermembrane space (IMS) are transferred via the dinuclear copper A center (CU(A)) of subunit 2 and heme A of subunit 1 to the active site in subunit 1, a binuclear center (BNC) formed by heme A3 and copper B (CU(B)). The BNC reduces molecular oxygen to 2 water molecules using 4 electrons from cytochrome c in the IMS and 4 protons from the mitochondrial matrix. The protein is Cytochrome c oxidase subunit 3 (MT-CO3) of Nanger granti (Grant's gazelle).